Here is a 439-residue protein sequence, read N- to C-terminus: MGKTFIVRAQYLLTMNKKDEVIENGALVVEDGRIKDVGEFTEILKKYKDPSIPVYGNSYSALMPGFINTHTHAAMVLFRGIADDLPLKQWLTEHIWPKEAKFLSPEFVHDGTSLACIEMLKSGTTTFNDMYFFTEAIAQAAKKLGIRAVVGQGVLDFPTASGKGADDYLAKAKEFIEKYKSDELILPAVAPHAIYTCSRETLLKSKELALKNNVPIHIHLSETFHEVEECLKNNGKRPVKYLKNIGFLEGRITAAHSVWLDDEEIDIMAERNIGVSHCIESNLKLSSGIAPVAKMIKKGVKVSMGTDGAASNNNLDLLEEISIAAKVQKGITADPTVLDVKTCMKMLTIWAAESLGVEKEIGSIETGKRADLVLMNLRKPHLQPVYDIYSTIIYSAKASDIEDVFVNGILVILNGRHQFIDEDELIDKAIWWAERIRNS.

Zn(2+) contacts are provided by histidine 70 and histidine 72. 2 residues coordinate substrate: glutamate 99 and histidine 192. A Zn(2+)-binding site is contributed by histidine 219. Residues glutamate 222 and aspartate 307 each coordinate substrate. Aspartate 307 contacts Zn(2+).

The protein belongs to the metallo-dependent hydrolases superfamily. MTA/SAH deaminase family. Zn(2+) is required as a cofactor.

It catalyses the reaction S-adenosyl-L-homocysteine + H2O + H(+) = S-inosyl-L-homocysteine + NH4(+). It carries out the reaction S-methyl-5'-thioadenosine + H2O + H(+) = S-methyl-5'-thioinosine + NH4(+). In terms of biological role, catalyzes the deamination of 5-methylthioadenosine and S-adenosyl-L-homocysteine into 5-methylthioinosine and S-inosyl-L-homocysteine, respectively. Is also able to deaminate adenosine. The protein is 5-methylthioadenosine/S-adenosylhomocysteine deaminase of Thermodesulfovibrio yellowstonii (strain ATCC 51303 / DSM 11347 / YP87).